Here is a 362-residue protein sequence, read N- to C-terminus: Cobalt-precorrin-5B C(1)-methyltransferase (362 aa).

The protein belongs to the CbiD family.

It carries out the reaction Co-precorrin-5B + S-adenosyl-L-methionine = Co-precorrin-6A + S-adenosyl-L-homocysteine. The protein operates within cofactor biosynthesis; adenosylcobalamin biosynthesis; cob(II)yrinate a,c-diamide from sirohydrochlorin (anaerobic route): step 6/10. Functionally, catalyzes the methylation of C-1 in cobalt-precorrin-5B to form cobalt-precorrin-6A. This is Cobalt-precorrin-5B C(1)-methyltransferase from Burkholderia thailandensis (strain ATCC 700388 / DSM 13276 / CCUG 48851 / CIP 106301 / E264).